Reading from the N-terminus, the 124-residue chain is MTTVIHMMNGINSVAPTFKVNYFTNEHDVFKIGFSNDVVFEVNTRTYEVGTPEEFRLNAGQAAITVAFWDAFVQGGDDEKFFTTIESRLKSSVAYATWQLGIDFLPDIAWSKISPVELNLATLQ.

This is an uncharacterized protein from Magallana gigas (Pacific oyster).